A 138-amino-acid chain; its full sequence is Large ribosomal subunit protein uL16 (138 aa).

Residues 1–15 (MLSPKKVKYRKKQRG) are compositionally biased toward basic residues. The disordered stretch occupies residues 1–21 (MLSPKKVKYRKKQRGRLSGEA).

It belongs to the universal ribosomal protein uL16 family. Part of the 50S ribosomal subunit.

In terms of biological role, binds 23S rRNA and is also seen to make contacts with the A and possibly P site tRNAs. This Borreliella burgdorferi (strain ATCC 35210 / DSM 4680 / CIP 102532 / B31) (Borrelia burgdorferi) protein is Large ribosomal subunit protein uL16.